Here is a 127-residue protein sequence, read N- to C-terminus: Large ribosomal subunit protein bL21 (127 aa).

It belongs to the bacterial ribosomal protein bL21 family. In terms of assembly, part of the 50S ribosomal subunit. Contacts protein L20.

In terms of biological role, this protein binds to 23S rRNA in the presence of protein L20. The chain is Large ribosomal subunit protein bL21 from Blochmanniella floridana.